The chain runs to 71 residues: MLILTRRVGETLMVGDEVTVTVLGVKGNQVRIGVNAPKEVSVHREEIYMRIQAEKNGQLAGHDSSSSDEDN.

This sequence belongs to the CsrA/RsmA family. As to quaternary structure, homodimer; the beta-strands of each monomer intercalate to form a hydrophobic core, while the alpha-helices form wings that extend away from the core.

Its subcellular location is the cytoplasm. Its function is as follows. A key translational regulator that binds mRNA to regulate translation initiation and/or mRNA stability. Mediates global changes in gene expression, shifting from rapid growth to stress survival by linking envelope stress, the stringent response and the catabolite repression systems. Usually binds in the 5'-UTR; binding at or near the Shine-Dalgarno sequence prevents ribosome-binding, repressing translation, binding elsewhere in the 5'-UTR can activate translation and/or stabilize the mRNA. Its function is antagonized by small RNA(s). The polypeptide is Translational regulator CsrA (Pseudoalteromonas atlantica (strain T6c / ATCC BAA-1087)).